A 407-amino-acid chain; its full sequence is Putative mannan endo-1,4-beta-mannosidase 9 (407 aa).

Residues 1–31 form the signal peptide; it reads MGSKRRVILLPTLGVVVLAIAAAVLLHAGEA. Substrate is bound by residues tryptophan 95 and asparagine 208. Residue glutamate 209 is the Proton donor of the active site. Residue tyrosine 284 participates in substrate binding. Glutamate 324 functions as the Nucleophile in the catalytic mechanism. A substrate-binding site is contributed by tryptophan 366.

Belongs to the glycosyl hydrolase 5 (cellulase A) family. Expression not detected.

It is found in the secreted. The enzyme catalyses Random hydrolysis of (1-&gt;4)-beta-D-mannosidic linkages in mannans, galactomannans and glucomannans.. The chain is Putative mannan endo-1,4-beta-mannosidase 9 (MAN9) from Oryza sativa subsp. japonica (Rice).